Consider the following 161-residue polypeptide: Ragulator complex protein LAMTOR1 (161 aa).

The interval M1–L43 is disordered. G2 carries the N-myristoyl glycine lipid modification. Residues C3 and C4 are each lipidated (S-palmitoyl cysteine). Residue K20 forms a Glycyl lysine isopeptide (Lys-Gly) (interchain with G-Cter in ubiquitin) linkage. S27 bears the Phosphoserine mark. Residue K31 forms a Glycyl lysine isopeptide (Lys-Gly) (interchain with G-Cter in ubiquitin) linkage. 2 positions are modified to phosphoserine: S42 and S56. K60 is covalently cross-linked (Glycyl lysine isopeptide (Lys-Gly) (interchain with G-Cter in ubiquitin)). Residue S98 is modified to Phosphoserine. Glycyl lysine isopeptide (Lys-Gly) (interchain with G-Cter in ubiquitin) cross-links involve residues K103 and K104. Residues S121–P161 are interaction with LAMTOR2 and LAMTOR3. S141 is modified (phosphoserine).

This sequence belongs to the LAMTOR1 family. Part of the Ragulator complex composed of LAMTOR1, LAMTOR2, LAMTOR3, LAMTOR4 and LAMTOR5. LAMTOR4 and LAMTOR5 form a heterodimer that interacts, through LAMTOR1, with a LAMTOR2, LAMTOR3 heterodimer. Interacts with LAMTOR2 and LAMTOR3; the interaction is direct. The Ragulator complex interacts with both the mTORC1 complex and heterodimers constituted of the Rag GTPases RagA/RRAGA, RagB/RRAGB, RagC/RRAGC and RagD/RRAGD; regulated by amino acid availability. The Ragulator complex interacts with SLC38A9; the probable amino acid sensor. Component of the lysosomal folliculin complex (LFC), composed of FLCN, FNIP1 (or FNIP2), RagA/RRAGA or RagB/RRAGB GDP-bound, RagC/RRAGC or RagD/RRAGD GTP-bound, and Ragulator. Associates with the lysosomal V-ATPase complex; interaction promotes the guanine nucleotide exchange factor (GEF) of the Ragulator complex. Interacts with MMP14. Interacts with CDKN1B; prevents the interaction of CDKN1B with RHOA leaving RHOA in a form accessible to activation by ARHGEF2. Interacts with PIP4P1. N-terminal myristoylation and palmitoylation mediates its recruitment to lysosome membranes, thereby promoting localization of the Ragulator complex to lysosomes. N-myristoylation by NMT1 is required for palmitoylation at Cys-3 and Cys-4. May be palmitoylated by ZDHHC3. Post-translationally, ubiquitinated at Lys-60, Lys-103 and Lys-104 by UBE3A, promoting its degradation by the proteasome. Ubiquitination at Lys-20 impairs the association with the lysosomal V-ATPase complex. Deubiquitination at Lys-20 by USP32 promotes the association with the lysosomal V-ATPase complex and subsequent activation of the mTORC1 complex.

Its subcellular location is the lysosome membrane. The protein resides in the late endosome membrane. Key component of the Ragulator complex, a multiprotein complex involved in amino acid sensing and activation of mTORC1, a signaling complex promoting cell growth in response to growth factors, energy levels, and amino acids. Activated by amino acids through a mechanism involving the lysosomal V-ATPase, the Ragulator plays a dual role for the small GTPases Rag (RagA/RRAGA, RagB/RRAGB, RagC/RRAGC and/or RagD/RRAGD): it (1) acts as a guanine nucleotide exchange factor (GEF), activating the small GTPases Rag and (2) mediates recruitment of Rag GTPases to the lysosome membrane. Activated Ragulator and Rag GTPases function as a scaffold recruiting mTORC1 to lysosomes where it is in turn activated. LAMTOR1 is directly responsible for anchoring the Ragulator complex to the lysosomal membrane. LAMTOR1 wraps around the other subunits of the Ragulator complex to hold them in place and interacts with the Rag GTPases, thereby playing a key role in the recruitment of the mTORC1 complex to lysosomes. Also involved in the control of embryonic stem cells differentiation via non-canonical RagC/RRAGC and RagD/RRAGD activation: together with FLCN, it is necessary to recruit and activate RagC/RRAGC and RagD/RRAGD at the lysosomes, and to induce exit of embryonic stem cells from pluripotency via non-canonical, mTOR-independent TFE3 inactivation. Also required for late endosomes/lysosomes biogenesis it may regulate both the recycling of receptors through endosomes and the MAPK signaling pathway through recruitment of some of its components to late endosomes. May be involved in cholesterol homeostasis regulating LDL uptake and cholesterol release from late endosomes/lysosomes. May also play a role in RHOA activation. The sequence is that of Ragulator complex protein LAMTOR1 from Homo sapiens (Human).